A 114-amino-acid chain; its full sequence is Protachykinin (114 aa).

The signal sequence occupies residues 1–19 (MKFLLPSIVIFLVLCQVFG). A propeptide spanning residues 20-55 (EELGPKEDLDYWTGSNQVQDEWLQADPFREIIRRMT) is cleaved from the precursor. Methionine amide occurs at positions 67 and 91.

The protein belongs to the tachykinin family. In terms of tissue distribution, expressed in all parts of the brain, with robust expression in the olfactory bulbs and tracts, moderate expression in the hypothalamus and posterior brain, and weak expression in the telencephalon-preoptic region and optic tectum-thalamus. Also expressed in nerve fibers, intestine, testes and pituitary gland. Not expressed in the liver or kidneys.

It localises to the secreted. In terms of biological role, tachykinins are active peptides which excite neurons, evoke behavioral responses, are potent vasodilators and secretagogues, and contract (directly or indirectly) many smooth muscles. Substance P produces a voltage-dependent inhibition of calcium current in retinal bipolar cells. It can enhance learning and memory, may regulate social approach and feeding behaviors, and can accelerate the functional recovery in postural balance in response to light after unilateral labyrinthectomy. The polypeptide is Protachykinin (Carassius auratus (Goldfish)).